A 427-amino-acid chain; its full sequence is Indole diterpene prenyltransferase ptmD (427 aa).

L-tryptophan is bound at residue 77–78; sequence YV. Arg-99, Lys-186, Tyr-188, Arg-259, Lys-261, Tyr-263, Tyr-344, Tyr-409, and Tyr-413 together coordinate substrate.

This sequence belongs to the tryptophan dimethylallyltransferase family.

It functions in the pathway secondary metabolite biosynthesis. In terms of biological role, indole diterpene prenyltransferase; part of the gene cluster that mediates the biosynthesis of the indole diterpenes penitrems. The geranylgeranyl diphosphate (GGPP) synthase ptmG catalyzes the first step in penitrem biosynthesis via conversion of farnesyl pyrophosphate and isopentyl pyrophosphate into geranylgeranyl pyrophosphate (GGPP). Condensation of indole-3-glycerol phosphate with GGPP by the prenyl transferase ptmC then forms 3-geranylgeranylindole (3-GGI). Epoxidation by the FAD-dependent monooxygenase ptmM leads to a epoxidized-GGI that is substrate of the terpene cyclase ptmB for cyclization to yield paspaline. Paspaline is subsequently converted to 13-desoxypaxilline by the cytochrome P450 monooxygenase ptmP, the latter being then converted to paxilline by the cytochrome P450 monooxygenase ptmQ. Paxilline is converted to beta-paxitriol via C-10 ketoreduction by the short-chain dehydrogenase ptmH which can be monoprenylated at the C-20 by the indole diterpene prenyltransferase ptmD. A two-step elimination (acetylation and elimination) process performed by the O-acetyltransferase ptmV and ptmI leads to the production of the prenylated form of penijanthine. The FAD-linked oxidoreductase ptmO then converts the prenylated form of penijanthine into PC-M5 which is in turn transformed into PC-M4 by the aromatic dimethylallyltransferase ptmE. Five sequential oxidative transformations performed by the cytochrome P450 monooxygenases ptmK, ptmU, ptmL, ptmN and ptmJ yield the various penitrem compounds. PtmK, ptmU and ptmM are involved in the formation of the key bicyclic ring of penitrem C via the formation of the intermediates secopenitrem D and penitrem D. PtmL catalyzes the epoxidation of penitrem D and C to yield penitrem B and F, respectively. PtmJ catalyzes the last benzylic hydroxylation to convert penitrem B to prenitrem E and penitrem F to penitrem A. The protein is Indole diterpene prenyltransferase ptmD of Penicillium ochrochloron.